A 218-amino-acid chain; its full sequence is Hypoxanthine-guanine phosphoribosyltransferase (218 aa).

An N-acetylalanine modification is found at alanine 2. Lysine 69 contacts GMP. N6-acetyllysine is present on lysine 103. Residue lysine 115 forms a Glycyl lysine isopeptide (Lys-Gly) (interchain with G-Cter in SUMO1); alternate linkage. Lysine 115 participates in a covalent cross-link: Glycyl lysine isopeptide (Lys-Gly) (interchain with G-Cter in SUMO2); alternate. Residues 134 to 142 (EDIIDTGKT), lysine 166, 186 to 188 (KFV), and aspartate 194 each bind GMP. Aspartate 138 acts as the Proton acceptor in catalysis. Residue threonine 142 is modified to Phosphothreonine. Aspartate 194 serves as a coordination point for Mg(2+).

The protein belongs to the purine/pyrimidine phosphoribosyltransferase family. In terms of assembly, homotetramer. It depends on Mg(2+) as a cofactor.

It localises to the cytoplasm. It carries out the reaction IMP + diphosphate = hypoxanthine + 5-phospho-alpha-D-ribose 1-diphosphate. It catalyses the reaction GMP + diphosphate = guanine + 5-phospho-alpha-D-ribose 1-diphosphate. It participates in purine metabolism; IMP biosynthesis via salvage pathway; IMP from hypoxanthine: step 1/1. In terms of biological role, converts guanine to guanosine monophosphate, and hypoxanthine to inosine monophosphate. Transfers the 5-phosphoribosyl group from 5-phosphoribosylpyrophosphate onto the purine. Plays a central role in the generation of purine nucleotides through the purine salvage pathway. This is Hypoxanthine-guanine phosphoribosyltransferase (HPRT1) from Cricetulus griseus (Chinese hamster).